We begin with the raw amino-acid sequence, 327 residues long: Acetyl-coenzyme A carboxylase carboxyl transferase subunit beta (327 aa).

The CoA carboxyltransferase N-terminal domain maps to 24–293; sequence LWIKCPDTGQ…LTVTTAVEAP (270 aa). The span at 293 to 311 shows a compositional bias: low complexity; sequence PAEAAAKAEPEATTTEQPV. Positions 293–327 are disordered; it reads PAEAAAKAEPEATTTEQPVAPAPTEPPAQPAAPQA. Positions 312 to 327 are enriched in pro residues; the sequence is APAPTEPPAQPAAPQA.

It belongs to the AccD/PCCB family. Acetyl-CoA carboxylase is a heterohexamer composed of biotin carboxyl carrier protein (AccB), biotin carboxylase (AccC) and two subunits each of ACCase subunit alpha (AccA) and ACCase subunit beta (AccD).

The protein localises to the cytoplasm. It catalyses the reaction N(6)-carboxybiotinyl-L-lysyl-[protein] + acetyl-CoA = N(6)-biotinyl-L-lysyl-[protein] + malonyl-CoA. It functions in the pathway lipid metabolism; malonyl-CoA biosynthesis; malonyl-CoA from acetyl-CoA: step 1/1. In terms of biological role, component of the acetyl coenzyme A carboxylase (ACC) complex. Biotin carboxylase (BC) catalyzes the carboxylation of biotin on its carrier protein (BCCP) and then the CO(2) group is transferred by the transcarboxylase to acetyl-CoA to form malonyl-CoA. The polypeptide is Acetyl-coenzyme A carboxylase carboxyl transferase subunit beta (Rhodopseudomonas palustris (strain TIE-1)).